A 752-amino-acid polypeptide reads, in one-letter code: Pentatricopeptide repeat-containing protein At5g13270, chloroplastic (752 aa).

Residues 1–80 constitute a chloroplast transit peptide; the sequence is MTILTVQSSF…LQEMDKAGVS (80 aa). PPR repeat units lie at residues 47 to 81, 82 to 116, 117 to 147, 148 to 182, 183 to 217, 218 to 248, 249 to 283, 284 to 318, 319 to 349, 350 to 384, 386 to 420, 421 to 451, 452 to 486, 487 to 522, and 523 to 553; these read QGQV…GVSV, SSYS…IENP, SVLL…MSEL, NAVS…GDKP, PSSM…GLCS, NTSI…MAVK, KPVA…GVEW, DSFV…GLES, EVSV…IREP, NDVS…NASI, NSFT…SLIG, SQYG…MDNP, DIVA…GMKP, NSVT…NVAP, and TIDH…MPFE. The tract at residues 558-633 is type E motif; it reads SWKCFLSGCW…ELSCSWIQEK (76 aa). The segment at 634 to 664 is type E(+) motif; the sequence is GKIHRFIVGDKHHPQTQEIYEKLKEFDGFME. The segment at 665–752 is type DYW motif; it reads GDMFQCNMTE…EGKCSCNDYW (88 aa).

It belongs to the PPR family. PCMP-H subfamily.

The protein resides in the plastid. It is found in the chloroplast. The protein is Pentatricopeptide repeat-containing protein At5g13270, chloroplastic (PCMP-H90) of Arabidopsis thaliana (Mouse-ear cress).